A 211-amino-acid chain; its full sequence is Thymidylate kinase (211 aa).

Residue 11–18 (GPDGAGKT) participates in ATP binding.

The protein belongs to the thymidylate kinase family.

It carries out the reaction dTMP + ATP = dTDP + ADP. Its function is as follows. Phosphorylation of dTMP to form dTDP in both de novo and salvage pathways of dTTP synthesis. The protein is Thymidylate kinase of Streptococcus pyogenes serotype M49 (strain NZ131).